Here is a 258-residue protein sequence, read N- to C-terminus: Short-chain dehydrogenase/reductase aba4 (258 aa).

3 residues coordinate NADP(+): Ile20, Asp66, and Lys130. Residues Ser146 and Tyr160 each act as proton donor in the active site. Positions 160, 164, 193, and 195 each coordinate NADP(+). Lys164 (lowers pKa of active site Tyr) is an active-site residue.

It belongs to the short-chain dehydrogenases/reductases (SDR) family.

Its pathway is hormone biosynthesis. Short-chain dehydrogenase/reductase; part of the gene cluster that mediates the biosynthesis of abscisic acid (ABA), a phytohormone that acts antagonistically toward salicylic acid (SA), jasmonic acid (JA) and ethylene (ETH) signaling, to impede plant defense responses. The first step of the pathway catalyzes the reaction from farnesyl diphosphate to alpha-ionylideneethane performed by the alpha-ionylideneethane synthase aba3 via a three-step reaction mechanism involving 2 neutral intermediates, beta-farnesene and allofarnesene. The cytochrome P450 monooxygenase aba1 might then be involved in the conversion of alpha-ionylideneethane to alpha-ionylideneacetic acid. Alpha-ionylideneacetic acid is further converted to abscisic acid in 2 steps involving the cytochrome P450 monooxygenase aba2 and the short-chain dehydrogenase/reductase aba4, via the intermediates 1'-deoxy-ABA or 1',4'-trans-diol-ABA, depending on the order of action of these 2 enzymes. Aba2 is responsible for the hydroxylation of carbon atom C-1' and aba4 might be involved in the oxidation of the C-4' carbon atom. This chain is Short-chain dehydrogenase/reductase aba4, found in Botryotinia fuckeliana (Noble rot fungus).